A 113-amino-acid polypeptide reads, in one-letter code: Molt-inhibiting hormone (113 aa).

The N-terminal stretch at 1–35 (MMSLAHSKFSCQRTRLLAVVLLAALWSSSLQQAAA) is a signal peptide. Intrachain disulfides connect cysteine 42-cysteine 79, cysteine 59-cysteine 75, and cysteine 62-cysteine 88.

The protein belongs to the arthropod CHH/MIH/GIH/VIH hormone family.

It localises to the secreted. Inhibits Y-organs where molting hormone (ecdysteroid) is secreted. A molting cycle is initiated when MIH secretion diminishes or stops. The chain is Molt-inhibiting hormone from Callinectes sapidus (Blue crab).